A 303-amino-acid polypeptide reads, in one-letter code: Glycine--tRNA ligase alpha subunit (303 aa).

This sequence belongs to the class-II aminoacyl-tRNA synthetase family. As to quaternary structure, tetramer of two alpha and two beta subunits.

It localises to the cytoplasm. It carries out the reaction tRNA(Gly) + glycine + ATP = glycyl-tRNA(Gly) + AMP + diphosphate. The polypeptide is Glycine--tRNA ligase alpha subunit (Syntrophomonas wolfei subsp. wolfei (strain DSM 2245B / Goettingen)).